Consider the following 269-residue polypeptide: Diaminopimelate epimerase (269 aa).

Substrate contacts are provided by Asn-15, Gln-49, and Asn-66. Cys-75 (proton donor) is an active-site residue. Substrate is bound by residues 76-77 (GN), Asn-155, Asn-187, and 204-205 (ER). Cys-213 acts as the Proton acceptor in catalysis. 214–215 (GS) lines the substrate pocket.

It belongs to the diaminopimelate epimerase family. In terms of assembly, homodimer.

It is found in the cytoplasm. The enzyme catalyses (2S,6S)-2,6-diaminopimelate = meso-2,6-diaminopimelate. It participates in amino-acid biosynthesis; L-lysine biosynthesis via DAP pathway; DL-2,6-diaminopimelate from LL-2,6-diaminopimelate: step 1/1. In terms of biological role, catalyzes the stereoinversion of LL-2,6-diaminopimelate (L,L-DAP) to meso-diaminopimelate (meso-DAP), a precursor of L-lysine and an essential component of the bacterial peptidoglycan. In Rickettsia canadensis (strain McKiel), this protein is Diaminopimelate epimerase.